The following is a 1149-amino-acid chain: ATP-dependent helicase/deoxyribonuclease subunit B (1149 aa).

ATP is bound at residue 8–15 (GRAGSGKS). [4Fe-4S] cluster is bound by residues Cys-788, Cys-1106, Cys-1109, and Cys-1115.

It belongs to the helicase family. AddB/RexB type 1 subfamily. Heterodimer of AddA and AddB. Mg(2+) serves as cofactor. It depends on [4Fe-4S] cluster as a cofactor.

In terms of biological role, the heterodimer acts as both an ATP-dependent DNA helicase and an ATP-dependent, dual-direction single-stranded exonuclease. Recognizes the chi site generating a DNA molecule suitable for the initiation of homologous recombination. The AddB subunit has 5' -&gt; 3' nuclease activity but not helicase activity. This chain is ATP-dependent helicase/deoxyribonuclease subunit B, found in Ruminiclostridium cellulolyticum (strain ATCC 35319 / DSM 5812 / JCM 6584 / H10) (Clostridium cellulolyticum).